A 239-amino-acid polypeptide reads, in one-letter code: MKIDILTLFPEMFSPLEHSIVGKAREKGLLDIQYHNFRENAEKARHVDDDPYGGGQGMLLRAQPIFDSFDAIEKKNPRVILLDPAGKQFDQAYAEDLAQEEELIFICGHYEGYDERIKTLVTDEISLGDYVLTGGELAAMTMIDATVRLIPEVIGKESSHQDDSFSSGLLEYPQYTRPYDYRGMVVPDVLMSGHHEKIRQWRLYESLKKTYERRPDLLEHYQLTVEEEKMLAEIKENKE.

S-adenosyl-L-methionine-binding positions include G108 and L127–L132.

It belongs to the RNA methyltransferase TrmD family. Homodimer.

The protein localises to the cytoplasm. The catalysed reaction is guanosine(37) in tRNA + S-adenosyl-L-methionine = N(1)-methylguanosine(37) in tRNA + S-adenosyl-L-homocysteine + H(+). Functionally, specifically methylates guanosine-37 in various tRNAs. This Streptococcus pneumoniae (strain JJA) protein is tRNA (guanine-N(1)-)-methyltransferase.